The sequence spans 418 residues: Glutamyl-tRNA reductase (418 aa).

Residues 49-52 (TCNR), Ser109, 114-116 (EPQ), and Gln120 each bind substrate. Residue Cys50 is the Nucleophile of the active site. 189–194 (GAGETI) lines the NADP(+) pocket.

It belongs to the glutamyl-tRNA reductase family. In terms of assembly, homodimer.

It catalyses the reaction (S)-4-amino-5-oxopentanoate + tRNA(Glu) + NADP(+) = L-glutamyl-tRNA(Glu) + NADPH + H(+). Its pathway is porphyrin-containing compound metabolism; protoporphyrin-IX biosynthesis; 5-aminolevulinate from L-glutamyl-tRNA(Glu): step 1/2. Functionally, catalyzes the NADPH-dependent reduction of glutamyl-tRNA(Glu) to glutamate 1-semialdehyde (GSA). The polypeptide is Glutamyl-tRNA reductase (Escherichia coli O139:H28 (strain E24377A / ETEC)).